Consider the following 286-residue polypeptide: Bifunctional protein FolD (286 aa).

Residues 165–167 (GRS) and S190 each bind NADP(+).

Belongs to the tetrahydrofolate dehydrogenase/cyclohydrolase family. In terms of assembly, homodimer.

The enzyme catalyses (6R)-5,10-methylene-5,6,7,8-tetrahydrofolate + NADP(+) = (6R)-5,10-methenyltetrahydrofolate + NADPH. It carries out the reaction (6R)-5,10-methenyltetrahydrofolate + H2O = (6R)-10-formyltetrahydrofolate + H(+). It functions in the pathway one-carbon metabolism; tetrahydrofolate interconversion. Catalyzes the oxidation of 5,10-methylenetetrahydrofolate to 5,10-methenyltetrahydrofolate and then the hydrolysis of 5,10-methenyltetrahydrofolate to 10-formyltetrahydrofolate. This is Bifunctional protein FolD from Staphylococcus epidermidis (strain ATCC 35984 / DSM 28319 / BCRC 17069 / CCUG 31568 / BM 3577 / RP62A).